Here is a 93-residue protein sequence, read N- to C-terminus: Acylphosphatase (93 aa).

Residues 5–93 (TAILRVTGFV…EDRKTFDIVY (89 aa)) enclose the Acylphosphatase-like domain. Catalysis depends on residues arginine 20 and asparagine 38.

Belongs to the acylphosphatase family.

It catalyses the reaction an acyl phosphate + H2O = a carboxylate + phosphate + H(+). The protein is Acylphosphatase (acyP) of Listeria welshimeri serovar 6b (strain ATCC 35897 / DSM 20650 / CCUG 15529 / CIP 8149 / NCTC 11857 / SLCC 5334 / V8).